A 438-amino-acid polypeptide reads, in one-letter code: MTTKEFLTIIQKEANQIDYERYLKQLVYKKVSSDNKIAIFEVNNKYIASWIKSKFTNLIQHCFEIYDGSKPTIEIKLSNEKKSKKEILKEQTQNESTESTILNPSYTFDSFVVGPSNQMAYNASLAVANKPGIQYNPLFIYGGTGLGKTHLLQAVGNHAIEKGNTVIYVTIEQFMNDFTFSIKNKNMEHFRNKYRKCDVLLIDDIQFLSGKEQTQEEFFHTFNELHNAKKQIVMTSDRLPSQIAGLVDRLKSRFEWGLTADVQIPGLETKIAIIEKKSELNGICLSREIINFIATNLDNSIREIEGVLIRINASASLLNQEITLPMVQGLLKEQIKETKENVKLPDIINIVANQLNIKPSDIKSKKRTATVANARRIVIYLVRELTHNSMPDIAKFLGMKDHSAISHNIKKANELIEKDENFKLIIENLKNKIINSRE.

Residues 1–71 (MTTKEFLTII…CFEIYDGSKP (71 aa)) form a domain I, interacts with DnaA modulators region. Residues 71–100 (PTIEIKLSNEKKSKKEILKEQTQNESTEST) form a domain II region. The interval 101–315 (ILNPSYTFDS…GVLIRINASA (215 aa)) is domain III, AAA+ region. Residues Gly145, Gly147, Lys148, and Thr149 each coordinate ATP. Positions 316-438 (SLLNQEITLP…LKNKIINSRE (123 aa)) are domain IV, binds dsDNA.

This sequence belongs to the DnaA family. Oligomerizes as a right-handed, spiral filament on DNA at oriC.

The protein localises to the cytoplasm. In terms of biological role, plays an essential role in the initiation and regulation of chromosomal replication. ATP-DnaA binds to the origin of replication (oriC) to initiate formation of the DNA replication initiation complex once per cell cycle. Binds the DnaA box (a 9 base pair repeat at the origin) and separates the double-stranded (ds)DNA. Forms a right-handed helical filament on oriC DNA; dsDNA binds to the exterior of the filament while single-stranded (ss)DNA is stabiized in the filament's interior. The ATP-DnaA-oriC complex binds and stabilizes one strand of the AT-rich DNA unwinding element (DUE), permitting loading of DNA polymerase. After initiation quickly degrades to an ADP-DnaA complex that is not apt for DNA replication. Binds acidic phospholipids. This chain is Chromosomal replication initiator protein DnaA, found in Aliarcobacter butzleri (strain RM4018) (Arcobacter butzleri).